The sequence spans 222 residues: ATP-dependent dethiobiotin synthetase BioD 2 (222 aa).

Threonine 17 is a Mg(2+) binding site. Residue lysine 38 is part of the active site. Threonine 42 is a substrate binding site. Residues aspartate 55 and glutamate 112 each coordinate Mg(2+). ATP-binding positions include aspartate 55, 112 to 115, 172 to 173, 201 to 203, and glutamate 208; these read EGCG, NR, and PYL.

The protein belongs to the dethiobiotin synthetase family. In terms of assembly, homodimer. Requires Mg(2+) as cofactor.

The protein localises to the cytoplasm. The enzyme catalyses (7R,8S)-7,8-diammoniononanoate + CO2 + ATP = (4R,5S)-dethiobiotin + ADP + phosphate + 3 H(+). It participates in cofactor biosynthesis; biotin biosynthesis; biotin from 7,8-diaminononanoate: step 1/2. Functionally, catalyzes a mechanistically unusual reaction, the ATP-dependent insertion of CO2 between the N7 and N8 nitrogen atoms of 7,8-diaminopelargonic acid (DAPA, also called 7,8-diammoniononanoate) to form a ureido ring. The protein is ATP-dependent dethiobiotin synthetase BioD 2 of Yersinia pestis.